The chain runs to 547 residues: ATP synthase subunit alpha (547 aa).

172 to 179 (GDRKTGKT) is an ATP binding site.

Belongs to the ATPase alpha/beta chains family. In terms of assembly, F-type ATPases have 2 components, CF(1) - the catalytic core - and CF(0) - the membrane proton channel. CF(1) has five subunits: alpha(3), beta(3), gamma(1), delta(1), epsilon(1). CF(0) has three main subunits: a(1), b(2) and c(9-12). The alpha and beta chains form an alternating ring which encloses part of the gamma chain. CF(1) is attached to CF(0) by a central stalk formed by the gamma and epsilon chains, while a peripheral stalk is formed by the delta and b chains.

Its subcellular location is the cell membrane. It carries out the reaction ATP + H2O + 4 H(+)(in) = ADP + phosphate + 5 H(+)(out). In terms of biological role, produces ATP from ADP in the presence of a proton gradient across the membrane. The alpha chain is a regulatory subunit. In Rhodococcus opacus (strain B4), this protein is ATP synthase subunit alpha.